The sequence spans 405 residues: MKILIINTGSSSLKFAIYQYENSKKLISGVIEKIKEQKSIIKIINTDGSITERFEKGIENHPKAIEKMFKILLNSNSKILKNISEIKIIGHRVVHGGSYFKNSVILKNSNLDKLKQSSKLAPLHNPSAIAAIETVLKILPHAKQVLCFDTSWHQTIKKHAFLYATPYSWYKEHNIRKYGFHGLSYSYVTKRSSEILNKKIDNLNLIILHLGNGASINAVKDGKSYDTSMGITPLEGLVMGTRSGDIDPSIINLMSTILNKNTKQIEEILNKESGILGISEKSNDMRDIWNKIEEGEYQSKLAVEIMTYRVKKYIGSYIAILDFNVDAIVFTGGIGVVDYEVRELALKGFEKIGIELDLEKNKMAQNKNLESEISTIKSKVKILAIPTNEESTILEDIYNLIPKNL.

Asn-7 is a Mg(2+) binding site. Lys-14 provides a ligand contact to ATP. Arg-92 serves as a coordination point for substrate. Asp-149 acts as the Proton donor/acceptor in catalysis. ATP-binding positions include 209–213 (HLGNG) and 284–286 (DMR). Glu-389 contributes to the Mg(2+) binding site.

Belongs to the acetokinase family. As to quaternary structure, homodimer. It depends on Mg(2+) as a cofactor. Requires Mn(2+) as cofactor.

It localises to the cytoplasm. It carries out the reaction acetate + ATP = acetyl phosphate + ADP. It participates in metabolic intermediate biosynthesis; acetyl-CoA biosynthesis; acetyl-CoA from acetate: step 1/2. Functionally, catalyzes the formation of acetyl phosphate from acetate and ATP. Can also catalyze the reverse reaction. In Borrelia garinii subsp. bavariensis (strain ATCC BAA-2496 / DSM 23469 / PBi) (Borreliella bavariensis), this protein is Acetate kinase.